A 473-amino-acid polypeptide reads, in one-letter code: Photosystem II CP43 reaction center protein (473 aa).

Positions M1 to E14 are excised as a propeptide. T15 bears the N-acetylthreonine mark. The residue at position 15 (T15) is a Phosphothreonine. A run of 5 helical transmembrane segments spans residues L69–A93, L134–N155, K178–T200, K255–S275, and W291–A312. E367 is a binding site for [CaMn4O5] cluster. A helical transmembrane segment spans residues R447 to P471.

The protein belongs to the PsbB/PsbC family. PsbC subfamily. In terms of assembly, PSII is composed of 1 copy each of membrane proteins PsbA, PsbB, PsbC, PsbD, PsbE, PsbF, PsbH, PsbI, PsbJ, PsbK, PsbL, PsbM, PsbT, PsbX, PsbY, PsbZ, Psb30/Ycf12, at least 3 peripheral proteins of the oxygen-evolving complex and a large number of cofactors. It forms dimeric complexes. It depends on Binds multiple chlorophylls and provides some of the ligands for the Ca-4Mn-5O cluster of the oxygen-evolving complex. It may also provide a ligand for a Cl- that is required for oxygen evolution. PSII binds additional chlorophylls, carotenoids and specific lipids. as a cofactor.

Its subcellular location is the plastid. It localises to the chloroplast thylakoid membrane. Its function is as follows. One of the components of the core complex of photosystem II (PSII). It binds chlorophyll and helps catalyze the primary light-induced photochemical processes of PSII. PSII is a light-driven water:plastoquinone oxidoreductase, using light energy to abstract electrons from H(2)O, generating O(2) and a proton gradient subsequently used for ATP formation. In Arabis hirsuta (Hairy rock-cress), this protein is Photosystem II CP43 reaction center protein.